Consider the following 305-residue polypeptide: Acetyl-coenzyme A carboxylase carboxyl transferase subunit beta (305 aa).

A CoA carboxyltransferase N-terminal domain is found at L27–R296. C31, C34, C50, and C53 together coordinate Zn(2+). The segment at C31–C53 adopts a C4-type zinc-finger fold.

Belongs to the AccD/PCCB family. As to quaternary structure, acetyl-CoA carboxylase is a heterohexamer composed of biotin carboxyl carrier protein (AccB), biotin carboxylase (AccC) and two subunits each of ACCase subunit alpha (AccA) and ACCase subunit beta (AccD). Requires Zn(2+) as cofactor.

It is found in the cytoplasm. It catalyses the reaction N(6)-carboxybiotinyl-L-lysyl-[protein] + acetyl-CoA = N(6)-biotinyl-L-lysyl-[protein] + malonyl-CoA. Its pathway is lipid metabolism; malonyl-CoA biosynthesis; malonyl-CoA from acetyl-CoA: step 1/1. Its function is as follows. Component of the acetyl coenzyme A carboxylase (ACC) complex. Biotin carboxylase (BC) catalyzes the carboxylation of biotin on its carrier protein (BCCP) and then the CO(2) group is transferred by the transcarboxylase to acetyl-CoA to form malonyl-CoA. This chain is Acetyl-coenzyme A carboxylase carboxyl transferase subunit beta, found in Chloroflexus aurantiacus (strain ATCC 29366 / DSM 635 / J-10-fl).